Consider the following 107-residue polypeptide: MMKVLVVVALLVTLISYSSSEGIDDLEADELLSLMANEQTRKECIPKHHECTSNKHGCCRGNFFKYKCQCTTVVTQDGEQTERCFCGTPPHHKAAELVVGFGRKIFG.

Positions 1–20 are cleaved as a signal peptide; the sequence is MMKVLVVVALLVTLISYSSS. The propeptide occupies 21–41; the sequence is EGIDDLEADELLSLMANEQTR. Cystine bridges form between Cys44-Cys59, Cys51-Cys68, Cys58-Cys86, and Cys70-Cys84.

This sequence belongs to the neurotoxin 19 (CSTX) family. 04 (U1-Lctx) subfamily. As to expression, expressed by the venom gland.

It is found in the secreted. This chain is U1-lycotoxin-Ls1d, found in Lycosa singoriensis (Wolf spider).